The primary structure comprises 421 residues: Galactooligosaccharide-binding protein (421 aa).

The signal sequence occupies residues 1–22 (MKMAKKCSVFMLCAAVSLSLAA). Residue C23 is the site of N-palmitoyl cysteine attachment. The S-diacylglycerol cysteine moiety is linked to residue C23. Residues 393-421 (ATGKADPKQALDQAAETAKGQIKAKHSGK) are disordered.

Belongs to the bacterial solute-binding protein 1 family. The complex is composed of two ATP-binding proteins (MsmX), two transmembrane proteins (GanP and GanQ) and a solute-binding protein (GanS).

Its subcellular location is the cell membrane. Involved in galactan degradation. Part of the ABC transporter complex GanPQS involved in the uptake of galactooligosaccharides. Binds mainly galactotetraose and galactotriose. The protein is Galactooligosaccharide-binding protein of Bacillus subtilis (strain 168).